A 161-amino-acid polypeptide reads, in one-letter code: Regulator of ribonuclease activity A (161 aa).

The protein belongs to the RraA family. Homotrimer. Binds to both RNA-binding sites in the C-terminal region of Rne and to RhlB.

The protein localises to the cytoplasm. Its function is as follows. Globally modulates RNA abundance by binding to RNase E (Rne) and regulating its endonucleolytic activity. Can modulate Rne action in a substrate-dependent manner by altering the composition of the degradosome. Modulates RNA-binding and helicase activities of the degradosome. This Klebsiella pneumoniae (strain 342) protein is Regulator of ribonuclease activity A.